Consider the following 238-residue polypeptide: Ubiquitin-conjugating enzyme E2 R2 (238 aa).

The 167-residue stretch at 8–174 (SSQKALMLEL…IRKQVSATKA (167 aa)) folds into the UBC core domain. The active-site Glycyl thioester intermediate is the cysteine 93. Residues 98–113 (HPPVDDPQSGELPSER) are important for ubiquitin transfer. Residues 194–238 (TKVPSNDNSSDLLYDDLYDDDIDDEDEEEEDADCYDDDDSGNEES) are disordered. Residues 206 to 238 (LYDDLYDDDIDDEDEEEEDADCYDDDDSGNEES) show a composition bias toward acidic residues. The residue at position 233 (serine 233) is a Phosphoserine; by CK2.

The protein belongs to the ubiquitin-conjugating enzyme family. As to quaternary structure, interacts with multiple Cul1-RING E3 ubiquitin-protein ligase complexes, also known as SCF (SKP1-CUL1-F-box protein) complexes, including SCF(FBXW7) and SCF(BTRC). Interacts with multiple Cul2-RING (CRL2) E3 ubiquitin-protein ligase complexes, also known as ECS (Elongin BC-CUL2/5-SOCS-box protein) complexes, including CRL2(FEM1C) and ECS(VHL). When phosphorylated, interacts with beta-TrCP (BTRC).

It carries out the reaction S-ubiquitinyl-[E1 ubiquitin-activating enzyme]-L-cysteine + [E2 ubiquitin-conjugating enzyme]-L-cysteine = [E1 ubiquitin-activating enzyme]-L-cysteine + S-ubiquitinyl-[E2 ubiquitin-conjugating enzyme]-L-cysteine.. The protein operates within protein modification; protein ubiquitination. With respect to regulation, neddylation of CUL2 in the CRL2(FEM1C) E3 ligase complex increases substrate affinity of UBE2R2 and the ubiquitin-transfer rate in the E2-E3 complex. E2 ubiquitin-conjugating enzyme that accepts ubiquitin from an E1 ubiquitin-activating protein, and catalyzes its covalent attachment to other proteins by an E3 ubiquitin-protein ligase complex. In vitro catalyzes monoubiquitination and 'Lys-48'-linked polyubiquitination. Works in collaboration with various Cul1-RING and Cul2-RING E3 ligase complexes. May be involved in degradation of katenin. This is Ubiquitin-conjugating enzyme E2 R2 (UBE2R2) from Homo sapiens (Human).